The following is a 113-amino-acid chain: T cell receptor alpha variable 13-2 (113 aa).

The first 21 residues, 1 to 21 (MAGIRALFMYLWLQLDWVSRG), serve as a signal peptide directing secretion. The Ig-like domain occupies 22–113 (ESVGLHLPTL…DSAVYFCAEN (92 aa)). Cys43 and Cys110 are joined by a disulfide. The N-linked (GlcNAc...) asparagine glycan is linked to Asn87.

Alpha-beta TR is a heterodimer composed of an alpha and beta chain; disulfide-linked. The alpha-beta TR is associated with the transmembrane signaling CD3 coreceptor proteins to form the TR-CD3 (TcR or TCR). The assembly of alpha-beta TR heterodimers with CD3 occurs in the endoplasmic reticulum where a single alpha-beta TR heterodimer associates with one CD3D-CD3E heterodimer, one CD3G-CD3E heterodimer and one CD247 homodimer forming a stable octameric structure. CD3D-CD3E and CD3G-CD3E heterodimers preferentially associate with TR alpha and TR beta chains, respectively. The association of the CD247 homodimer is the last step of TcR assembly in the endoplasmic reticulum and is required for transport to the cell surface.

It is found in the cell membrane. In terms of biological role, v region of the variable domain of T cell receptor (TR) alpha chain that participates in the antigen recognition. Alpha-beta T cell receptors are antigen specific receptors which are essential to the immune response and are present on the cell surface of T lymphocytes. Recognize peptide-major histocompatibility (MH) (pMH) complexes that are displayed by antigen presenting cells (APC), a prerequisite for efficient T cell adaptive immunity against pathogens. Binding of alpha-beta TR to pMH complex initiates TR-CD3 clustering on the cell surface and intracellular activation of LCK that phosphorylates the ITAM motifs of CD3G, CD3D, CD3E and CD247 enabling the recruitment of ZAP70. In turn ZAP70 phosphorylates LAT, which recruits numerous signaling molecules to form the LAT signalosome. The LAT signalosome propagates signal branching to three major signaling pathways, the calcium, the mitogen-activated protein kinase (MAPK) kinase and the nuclear factor NF-kappa-B (NF-kB) pathways, leading to the mobilization of transcription factors that are critical for gene expression and essential for T cell growth and differentiation. The T cell repertoire is generated in the thymus, by V-(D)-J rearrangement. This repertoire is then shaped by intrathymic selection events to generate a peripheral T cell pool of self-MH restricted, non-autoaggressive T cells. Post-thymic interaction of alpha-beta TR with the pMH complexes shapes TR structural and functional avidity. The protein is T cell receptor alpha variable 13-2 of Homo sapiens (Human).